The sequence spans 60 residues: Cytotoxin 3 (60 aa).

Cystine bridges form between Cys3-Cys21, Cys14-Cys38, Cys42-Cys53, and Cys54-Cys59.

This sequence belongs to the three-finger toxin family. Short-chain subfamily. Type IA cytotoxin sub-subfamily. Monomer in solution; Homodimer and oligomer in the presence of negatively charged lipids forming a pore with a size ranging between 20 and 30 Angstroms. Expressed by the venom gland.

The protein resides in the secreted. The protein localises to the target cell membrane. Its function is as follows. Shows cytolytic activity on many different cells by forming pore in lipid membranes. In vivo, increases heart rate or kills the animal by cardiac arrest. In addition, it binds to heparin with high affinity, interacts with Kv channel-interacting protein 1 (KCNIP1) in a calcium-independent manner, and binds to integrin alpha-V/beta-3 (ITGAV/ITGB3) with moderate affinity. In Naja mossambica (Mozambique spitting cobra), this protein is Cytotoxin 3.